Here is a 272-residue protein sequence, read N- to C-terminus: Sordarin/hypoxysordarin biosynthesis cluster protein P (272 aa).

N-linked (GlcNAc...) asparagine glycosylation is found at Asn-6 and Asn-23. The next 2 helical transmembrane spans lie at 31–51 and 67–87; these read FLAS…LLFL and AYHM…VDLA. The N-linked (GlcNAc...) asparagine glycan is linked to Asn-208.

The protein resides in the membrane. Its pathway is antibiotic biosynthesis. Part of the gene cluster that mediates the biosynthesis of sordarin and hypoxysordarin, glycoside antibiotics with a unique tetracyclic diterpene aglycone structure. First, the geranylgeranyl diphosphate synthase sdnC constructs GGDP from farnesyl diphosphate and isopentenyl diphosphate. The diterpene cyclase sdnA then catalyzes the cyclization of GGDP to afford cycloaraneosene. Cycloaraneosene is then hydroxylated four times by the putative cytochrome P450 monooxygenases sdnB, sdnE, sdnF and sdnH to give a hydroxylated cycloaraneosene derivative such as cycloaraneosene-8,9,13,19-tetraol. Although the order of the hydroxylations is unclear, at least C8, C9 and C13 of the cycloaraneosene skeleton are hydroxylated before the sordaricin formation. Dehydration of the 13-hydroxy group of the hydroxylated cycloaraneosene derivative might be catalyzed by an unassigned hypothetical protein such as sdnG and sdnP to construct the cyclopentadiene moiety. The FAD-dependent oxidoreductase sdnN is proposed to catalyze the oxidation at C9 of the hydroxylated cycloaraneosene derivative and also catalyze the Baeyer-Villiger oxidation to give the lactone intermediate. The presumed lactone intermediate would be hydrolyzed to give an acrolein moiety and a carboxylate moiety. Then, [4+2]cycloaddition would occur between the acrolein moiety and the cyclopentadiene moiety to give sordaricin. SdnN might also be involved in the [4+2]cycloaddition after the hypothesized oxidation to accommodate the oxidized product and prompt the [4+2]cycloaddition. GDP-6-deoxy-D-altrose may be biosynthesized from GDP-D-mannose by the putative GDP-mannose-4,6-dehydratase sdnI and the short-chain dehydrogenase sdnK. The glycosyltransferase sdnJ catalyzes the attachment of 6-deoxy-D-altrose onto the 19-hydroxy group of sordaricin to give 4'-O-demethylsordarin. The methyltransferase sdnD would complete the biosynthesis of sordarin. Sordarin can be further modified into hypoxysordarin. The unique acyl chain at the 3'-hydroxy group of hypoxysordarin would be constructed by an iterative type I PKS sdnO and the trans-acting polyketide methyltransferase sdnL. SdnL would be responsible for the introduction of an alpha-methyl group of the polyketide chain. Alternatively, the beta-lactamase-like protein sdnR might be responsible for the cleavage and transfer of the polyketide chain from the PKS sdnO to sordarin. Two putative cytochrome P450 monooxygenases, sdnQ and sdnT, might catalyze the epoxidations of the polyketide chain to complete the biosynthesis of hypoxysordarin. Transcriptional regulators sdnM and sdnS are presumably encoded for the transcriptional regulation of the expression of the sdn gene cluster. This chain is Sordarin/hypoxysordarin biosynthesis cluster protein P, found in Sordaria araneosa (Pleurage araneosa).